Reading from the N-terminus, the 154-residue chain is Deoxyuridine 5'-triphosphate nucleotidohydrolase (154 aa).

Substrate-binding positions include 72–74, asparagine 85, 89–91, and methionine 99; these read RSG and LID.

It belongs to the dUTPase family. It depends on Mg(2+) as a cofactor.

It catalyses the reaction dUTP + H2O = dUMP + diphosphate + H(+). It functions in the pathway pyrimidine metabolism; dUMP biosynthesis; dUMP from dCTP (dUTP route): step 2/2. Functionally, this enzyme is involved in nucleotide metabolism: it produces dUMP, the immediate precursor of thymidine nucleotides and it decreases the intracellular concentration of dUTP so that uracil cannot be incorporated into DNA. The sequence is that of Deoxyuridine 5'-triphosphate nucleotidohydrolase from Psychrobacter arcticus (strain DSM 17307 / VKM B-2377 / 273-4).